A 458-amino-acid polypeptide reads, in one-letter code: Phosphoglucosamine mutase (458 aa).

Ser-109 (phosphoserine intermediate) is an active-site residue. The Mg(2+) site is built by Ser-109, Asp-251, Asp-253, and Asp-255. Phosphoserine is present on Ser-109.

It belongs to the phosphohexose mutase family. It depends on Mg(2+) as a cofactor. Activated by phosphorylation.

It catalyses the reaction alpha-D-glucosamine 1-phosphate = D-glucosamine 6-phosphate. Functionally, catalyzes the conversion of glucosamine-6-phosphate to glucosamine-1-phosphate. This chain is Phosphoglucosamine mutase, found in Myxococcus xanthus (strain DK1622).